We begin with the raw amino-acid sequence, 296 residues long: Glycine N-acyltransferase (296 aa).

Residues Lys-16, Lys-127, and Lys-141 each carry the N6-acetyllysine; alternate modification. Lys-16, Lys-127, and Lys-141 each carry N6-succinyllysine; alternate. Lys-159 is subject to N6-acetyllysine. Lys-169 is subject to N6-succinyllysine. An N6-acetyllysine; alternate mark is found at Lys-183 and Lys-256. 2 positions are modified to N6-succinyllysine; alternate: Lys-183 and Lys-256.

This sequence belongs to the glycine N-acyltransferase family. In terms of tissue distribution, predominantly expressed in liver (at protein level) and kidney. Down-regulated in hepatocellular carcinoma and other liver cancers.

The protein localises to the mitochondrion. It catalyses the reaction an acyl-CoA + glycine = an N-acylglycine + CoA + H(+). The enzyme catalyses benzoyl-CoA + glycine = N-benzoylglycine + CoA + H(+). In terms of biological role, mitochondrial acyltransferase which transfers an acyl group to the N-terminus of glycine and glutamine, although much less efficiently. Can conjugate numerous substrates to form a variety of N-acylglycines, with a preference for benzoyl-CoA over phenylacetyl-CoA as acyl donors. Thereby detoxify xenobiotics, such as benzoic acid or salicylic acid, and endogenous organic acids, such as isovaleric acid. In Homo sapiens (Human), this protein is Glycine N-acyltransferase (GLYAT).